Consider the following 700-residue polypeptide: ATP-dependent DNA helicase UvrD2 (700 aa).

The UvrD-like helicase ATP-binding domain maps to Ala-10–Thr-301. Residues Gly-34 to Arg-39 and Arg-299 each bind ATP. Positions Pro-302 to Val-553 constitute a UvrD-like helicase C-terminal domain. Residues Pro-565–Arg-595 are disordered. The HRDC domain maps to Ala-626–Thr-700.

Belongs to the helicase family. UvrD subfamily. Mg(2+) is required as a cofactor.

It catalyses the reaction Couples ATP hydrolysis with the unwinding of duplex DNA by translocating in the 3'-5' direction.. The catalysed reaction is ATP + H2O = ADP + phosphate + H(+). DNA-dependent ATPase, stimulated equally by ss- and dsDNA. Has both ATPase and helicase activities. This Mycobacterium bovis (strain ATCC BAA-935 / AF2122/97) protein is ATP-dependent DNA helicase UvrD2 (uvrD2).